The primary structure comprises 525 residues: Sucrose transport protein (525 aa).

Residues 1–37 (MAGRNIKNGENNKIAGSSLHLEKNPTTPPEAEATLKK) lie on the Cytoplasmic side of the membrane. 12 helical membrane passes run 38–58 (LGLVASVAAGVQFGWALQLSL), 72–92 (WAAYIWLCGPISGMIVQPLVG), 107–127 (PFIAAGAALVAVAVGLIGFAA), 145–165 (AIAVFVVGFWILDVANNTLQG), 184–204 (YANAFFSFFMALGNIGGYAAG), 230–250 (SCFFISITLLIVLTILALSVV), 295–315 (MLILLLVTALNWIAWFPFLLF), 338–358 (GVHAGALGLMINSVVLGVMSL), 373–393 (LWGIVNIILAVCLAMTVLVTK), 422–442 (LAIFAVLGIPLAITFSIPFAL), 455–475 (GLSLGVLNLAIVVPQMFVSVT), and 488–508 (LPAFVVGAVAATASAVLSFTL). Topologically, residues 509–525 (LPSPPPEAKIGGSMGGH) are cytoplasmic.

This sequence belongs to the glycoside-pentoside-hexuronide (GPH) cation symporter transporter (TC 2.A.2.4) family.

The protein localises to the membrane. The protein operates within glycan biosynthesis; sucrose metabolism. Its function is as follows. Responsible for the transport of sucrose into the cell, with the concomitant uptake of protons (symport system). Can also transport maltose at a lesser rate. This chain is Sucrose transport protein, found in Spinacia oleracea (Spinach).